A 61-amino-acid polypeptide reads, in one-letter code: Small ribosomal subunit protein uS14 (61 aa).

Residues C24, C27, C40, and C43 each contribute to the Zn(2+) site.

The protein belongs to the universal ribosomal protein uS14 family. Zinc-binding uS14 subfamily. As to quaternary structure, part of the 30S ribosomal subunit. Contacts proteins S3 and S10. Requires Zn(2+) as cofactor.

Binds 16S rRNA, required for the assembly of 30S particles and may also be responsible for determining the conformation of the 16S rRNA at the A site. The sequence is that of Small ribosomal subunit protein uS14 from Acidothermus cellulolyticus (strain ATCC 43068 / DSM 8971 / 11B).